The following is a 320-amino-acid chain: MKLAFILDPLDSIKIGKDSSYAMMREAAVRHHQLYTLQQNDLAWKDHQVIGFARPLTLLDPPEGDHRWYEEGAIEEIPLSGFDAVLMRKDPPFDTEYIYSTYLLELAERQGAYVVNSPRGIRDHNEKLAITEFPRFTPPSLVTSQEQLILEFLAEHEDIILKPLDGMGGAGIFRIQNTDHNIGVIIETLTRYGTRTIMAQRFLPEIREGDKRILLIAGRPVDYALARIPKPGETRGNLAAGGTGVARPLSARDREIAEELGQILYARGLMLVGLDVIGNHLTEINVTSPTGMREISDQTGTNVAGLMIDALEQNIARKNR.

The 186-residue stretch at 127-312 (KLAITEFPRF…VAGLMIDALE (186 aa)) folds into the ATP-grasp domain. ATP is bound at residue 153 to 209 (LAEHEDIILKPLDGMGGAGIFRIQNTDHNIGVIIETLTRYGTRTIMAQRFLPEIREG). Positions 283 and 285 each coordinate Mg(2+).

Belongs to the prokaryotic GSH synthase family. Requires Mg(2+) as cofactor. Mn(2+) is required as a cofactor.

It catalyses the reaction gamma-L-glutamyl-L-cysteine + glycine + ATP = glutathione + ADP + phosphate + H(+). It participates in sulfur metabolism; glutathione biosynthesis; glutathione from L-cysteine and L-glutamate: step 2/2. This Nitrosomonas europaea (strain ATCC 19718 / CIP 103999 / KCTC 2705 / NBRC 14298) protein is Glutathione synthetase.